A 226-amino-acid chain; its full sequence is Ribosomal RNA small subunit methyltransferase G (226 aa).

S-adenosyl-L-methionine is bound by residues Gly-83, Phe-88, 136 to 137 (IE), and Arg-152. The interval 199–226 (FSPSQSDPEGSVLKVRGLHGPDGQPHRR) is disordered.

Belongs to the methyltransferase superfamily. RNA methyltransferase RsmG family.

It is found in the cytoplasm. It carries out the reaction guanosine(527) in 16S rRNA + S-adenosyl-L-methionine = N(7)-methylguanosine(527) in 16S rRNA + S-adenosyl-L-homocysteine. In terms of biological role, specifically methylates the N7 position of guanine in position 527 of 16S rRNA. This Parvibaculum lavamentivorans (strain DS-1 / DSM 13023 / NCIMB 13966) protein is Ribosomal RNA small subunit methyltransferase G.